The sequence spans 497 residues: Cysteine-rich secretory protein LCCL domain-containing 2 (497 aa).

The first 22 residues, 1–22 (MSCVLGGVIPLGLLFLVCGSQG), serve as a signal peptide directing secretion. The N-linked (GlcNAc...) asparagine glycan is linked to asparagine 27. The SCP domain occupies 62-200 (LHNKLRGQVQ…ENAVYFVCNY (139 aa)). 2 consecutive LCCL domains span residues 284 to 379 (MTQV…SSSF) and 385 to 488 (KVQD…RDGK). Cystine bridges form between cysteine 290/cysteine 308, cysteine 312/cysteine 332, cysteine 391/cysteine 413, and cysteine 417/cysteine 440.

The protein belongs to the CRISP family. In terms of assembly, binds to heparin, dermatan sulfate and chondroitin sulfate.

The protein resides in the secreted. Its function is as follows. Promotes matrix assembly. The polypeptide is Cysteine-rich secretory protein LCCL domain-containing 2 (CRISPLD2) (Homo sapiens (Human)).